Reading from the N-terminus, the 670-residue chain is Receptor for retinol uptake STRA6 (670 aa).

The Extracellular segment spans residues 1–50 (MESQASENGSQTSSGVTDDYSSWYIEEPLGAEEVQPEGVIPLCQLTAPPA). N-linked (GlcNAc...) asparagine glycosylation occurs at N8. A helical transmembrane segment spans residues 51-71 (LLHACLASLSFLVLLLLALLV). Residues 72–97 (RRRRLWPRCGHRGLGLPSPVDFLAGD) lie on the Cytoplasmic side of the membrane. Residues 98-118 (LSWTVPAAVFVVLFSNLCLLL) traverse the membrane as a helical segment. Topologically, residues 119–144 (PDENPLPFLNLTAASSPDGEMETSRG) are extracellular. N128 carries an N-linked (GlcNAc...) asparagine glycan. Residues 145-165 (PWKLLALLYYPALYYPLAACA) traverse the membrane as a helical segment. At 166 to 168 (SAG) the chain is on the cytoplasmic side. The chain crosses the membrane as a helical span at residues 169 to 189 (HQAAFLLGTVLSWAHFGVQVW). Residues 190–205 (QKAECPQDPKIYKHYS) lie on the Extracellular side of the membrane. The helical transmembrane segment at 206–226 (LLASLPLLLGLGFLSLWYPVQ) threads the bilayer. Residues 227-296 (LVQSLRHRTG…PQPGFRLPLK (70 aa)) lie on the Cytoplasmic side of the membrane. Residues 235 to 294 (TGAGSQGLQTSYSEKYLRTLLCPKKLDSCSHPASKRSLLSRAWAFSHHSIYTPQPGFRLP) form an interaction with RBP1 region. A helical transmembrane segment spans residues 297-317 (LVISATLTGTATYQVALLLLV). The Extracellular segment spans residues 318–368 (SVVPTVQKVRAGINTDVSYLLAGFGIVLSEDRQEVVELVKHHLWTVEACYI). The helical transmembrane segment at 369-389 (SALVLSCASTFLLLIRSLRTH) threads the bilayer. The Cytoplasmic segment spans residues 390–423 (RANLQALHRGAALDLDPPLQSIHPSRQAIVSWMS). A helical membrane pass occupies residues 424-444 (FCAYQTAFSCLGLLVQQVIFF). The Extracellular portion of the chain corresponds to 445–474 (LGTTSLAFLVFVPLLHGRNLLLLRSLESTW). A helical membrane pass occupies residues 475–495 (PFWLTVALAVILQNIAANWIF). At 496–510 (LRTHHGYPELTNRRM) the chain is on the cytoplasmic side. Residues 511-548 (LCVATFLLFPINMLVGAIMAVWRVLISSLYNTVHLGQM) constitute an intramembrane region (helical). At 549 to 670 (DLSLLPQRAA…TSAKANGTQP (122 aa)) the chain is on the cytoplasmic side. The residue at position 644 (Y644) is a Phosphotyrosine.

Homodimer. Interacts with JAK2 and STAT5. Interacts (via extracellular domains) with RBP4. Interacts (via cytoplasmic domains) with RBP1. In terms of processing, phosphorylated on tyrosine residues in response to RBP4 binding. Phosphorylation requires the presence of LRAT, suggesting it may be triggered by the uptake of retinol that is then metabolized within the cell to retinoids that function as signaling molecules. Widely expressed in the embryo. Detected in adult in the retinal pigment epithelium in the eye. In the adult, is highly expressed in cells that compose blood-organ barriers in the brain (choroid plexus and the brain microvascular), in testis (the basal layer of the seminiferous epithelium), in the yolk sac, and in the chorioallantoic placenta. Detected in white adipose tissue and skeletal muscle, but not in liver (at protein level). Widely expressed in adult, with high expression levels in the eye. Detected in brain, cerebellum, testis, pituitary, pancreas, kidney, spleen, and female genital tract; and at very low levels in heart and lung. Not detected in liver.

The protein localises to the cell membrane. Functions as a retinol transporter. Accepts all-trans retinol from the extracellular retinol-binding protein RBP4, facilitates retinol transport across the cell membrane, and then transfers retinol to the cytoplasmic retinol-binding protein RBP1. Retinol uptake is enhanced by LRAT, an enzyme that converts retinol to all-trans retinyl esters, the storage forms of vitamin A. Contributes to the activation of a signaling cascade that depends on retinol transport and LRAT-dependent generation of retinol metabolites that then trigger activation of JAK2 and its target STAT5, and ultimately increase the expression of SOCS3 and inhibit cellular responses to insulin. Important for the homeostasis of vitamin A and its derivatives, such as retinoic acid and 11-cis-retinal. STRA6-mediated transport is particularly important in the eye, and under conditions of dietary vitamin A deficiency. Does not transport retinoic acid. The chain is Receptor for retinol uptake STRA6 (Stra6) from Mus musculus (Mouse).